The sequence spans 414 residues: Cytochrome c biogenesis protein Ccs1 (414 aa).

A run of 3 helical transmembrane segments spans residues 14–34, 73–93, and 159–179; these read LTVAIIILLAIALASALGTVI, SWWFIFLIILLLLSLTLCTIT, and VSPIIVHFSLVIVLIGSMLST.

It belongs to the Ccs1/CcsB family. In terms of assembly, may interact with CcsA.

The protein resides in the plastid. Its subcellular location is the chloroplast thylakoid membrane. Required during biogenesis of c-type cytochromes (cytochrome c6 and cytochrome f) at the step of heme attachment. The protein is Cytochrome c biogenesis protein Ccs1 of Guillardia theta (Cryptophyte).